We begin with the raw amino-acid sequence, 280 residues long: B3 domain-containing protein At5g25470 (280 aa).

The segment at residues 20–114 (WKSLSPGQNW…FLEVQIFKND (95 aa)) is a DNA-binding region (TF-B3 1). Residues 122 to 153 (PPEVEPETEPFHPTTPKNSHKETTTASASASA) are disordered. The segment at residues 183 to 276 (YFVKTLTKGN…ELVTAVRVHF (94 aa)) is a DNA-binding region (TF-B3 2).

It localises to the nucleus. The protein is B3 domain-containing protein At5g25470 of Arabidopsis thaliana (Mouse-ear cress).